Here is a 335-residue protein sequence, read N- to C-terminus: Transcriptional activator NphR (335 aa).

One can recognise an HTH araC/xylS-type domain in the interval 231–329 (TRVQRVIEQN…GSSPGLYRKE (99 aa)). 2 DNA-binding regions (H-T-H motif) span residues 249-270 (SDIA…NAEG) and 296-319 (VADV…RSTF).

Its function is as follows. Transcriptional activator of nphA1 and nphA2 involved in the degradation of 4-nitrophenol (4-NP). The protein is Transcriptional activator NphR (nphR) of Rhodococcus sp.